Consider the following 305-residue polypeptide: Peroxisome assembly protein 26 (305 aa).

Topologically, residues 1-246 are cytoplasmic; it reads MKSDASTSAA…RRLWGSVVSH (246 aa). Residues 247 to 267 traverse the membrane as a helical; Signal-anchor for type II membrane protein segment; sequence LLSQPFRKGLLAALILCLLIL. Residues 268–305 lie on the Peroxisomal matrix side of the membrane; that stretch reads RFDPAAPSSLPFLYQLTQLFRRIQKATLSRLYPLALRD.

Belongs to the peroxin-26 family. In terms of assembly, interacts (via its cytoplasmic domain) with PEX6; interaction is direct and is ATP-dependent. Interacts with PEX1; interaction is indirect and is mediated via interaction with PEX6.

The protein resides in the peroxisome membrane. Its function is as follows. Peroxisomal docking factor that anchors PEX1 and PEX6 to peroxisome membranes. PEX26 is therefore required for the formation of the PEX1-PEX6 AAA ATPase complex, a complex that mediates the extraction of the PEX5 receptor from peroxisomal membrane. This Mus musculus (Mouse) protein is Peroxisome assembly protein 26.